Reading from the N-terminus, the 429-residue chain is Glycogenin-1 (429 aa).

Residues L8, T10, N11, Y14, and R76 each contribute to the UDP site. 14 residues coordinate UDP-alpha-D-glucose: L8, T10, N11, Y14, R76, K85, D101, A102, D103, N132, S133, D159, D162, and Q163. Residues D101, A102, and D103 each contribute to the UDP site. Position 101 (D101) interacts with Mn(2+). Residue D103 participates in Mn(2+) binding. Y194 carries an O-linked (Glc...) tyrosine glycan. UDP-binding residues include H211, G214, and K217. H211 provides a ligand contact to Mn(2+). UDP-alpha-D-glucose-binding residues include G214 and K217. 2 disordered regions span residues 254–274 (VFPSHHHTPEHRSHSADHPKI) and 300–338 (SYDTDANTSDSHRNNEPHKHDQQREEHHELPHNKFQTPH). Basic and acidic residues-rich tracts occupy residues 263–274 (EHRSHSADHPKI) and 309–338 (DSHRNNEPHKHDQQREEHHELPHNKFQTPH).

The protein belongs to the glycosyltransferase 8 family. Glycogenin subfamily. In terms of assembly, forms a heterooctamer with one molecule of gyg-1 bound to each protomer of the gys-1 homotetramer. The N-terminus of gys-1 is involved in interprotomer contacts with gyg-1. The interaction with gys-1 is required for glycogen production but is not required for gys-1 intrinsic activity. Requires Mn(2+) as cofactor. In terms of processing, self-glycosylated by the transfer of glucose residues from UDP-glucose to itself, forming an alpha-1,4-glycan of around 10 residues attached to Tyr-194.

It is found in the cytoplasm. It localises to the nucleus. The enzyme catalyses L-tyrosyl-[glycogenin] + UDP-alpha-D-glucose = alpha-D-glucosyl-L-tyrosyl-[glycogenin] + UDP + H(+). It carries out the reaction [1,4-alpha-D-glucosyl](n)-L-tyrosyl-[glycogenin] + UDP-alpha-D-glucose = [1,4-alpha-D-glucosyl](n+1)-L-tyrosyl-[glycogenin] + UDP + H(+). The protein operates within glycan biosynthesis; glycogen biosynthesis. Its function is as follows. Self-glucosylating initiator of glycogen synthesis. It catalyzes the formation of a short alpha (1,4)-glucosyl chain covalently attached via a glucose 1-O-tyrosyl linkage to internal tyrosine residues and these chains act as primers for the elongation reaction catalyzed by glycogen synthase. In Caenorhabditis elegans, this protein is Glycogenin-1.